Here is a 244-residue protein sequence, read N- to C-terminus: Transforming protein v-Fos/v-Fox (244 aa).

The tract at residues 1–236 (DSLSYYHSPA…LFPASSGHSG (236 aa)) is transforming protein v-Fos. The 64-residue stretch at 113–176 (EVKRRIRRER…EKLEFILAAH (64 aa)) folds into the bZIP domain. The interval 115–135 (KRRIRRERNKMAAAKCRNRRR) is basic motif. A leucine-zipper region spans residues 141–169 (LQAETDQLEDEKSALQTEIANLLKEKEKL). The segment at 237 to 244 (FISMAGWQ) is transforming protein v-Fox.

Belongs to the bZIP family. Fos subfamily.

It localises to the host nucleus. The polypeptide is Transforming protein v-Fos/v-Fox (FOS-FOX) (Mus musculus (Mouse)).